Consider the following 347-residue polypeptide: Rhodopsin (347 aa).

The Extracellular portion of the chain corresponds to 1-33 (TEGPDFYIPMVNTTGVVRSPYEYPQYYLVNPAA). Asn12 is a glycosylation site (N-linked (GlcNAc...) asparagine). A helical transmembrane segment spans residues 34–58 (FAVLGAYMFFLIIIGFPINFLTLYV). Residues 59-70 (TLEHKKLRTPLN) lie on the Cytoplasmic side of the membrane. A helical membrane pass occupies residues 71 to 93 (YILLNLAVADLFMVIGGFTTTMY). Residues 94–107 (SSMHGYFVLGRLGC) lie on the Extracellular side of the membrane. The cysteines at positions 107 and 184 are disulfide-linked. A helical membrane pass occupies residues 108 to 130 (NIEGFFATLGGMISLWSLAVLAI). The 'Ionic lock' involved in activated form stabilization motif lies at 131 to 133 (ERW). Residues 131 to 149 (ERWVVVCKPISNFRFGENH) lie on the Cytoplasmic side of the membrane. Residues 150 to 170 (AIMGVSLTWVMALACTVPPLV) traverse the membrane as a helical segment. At 171–199 (GWSRYIPEGMQCACGIDYYTRAEGYNNES) the chain is on the extracellular side. A glycan (N-linked (GlcNAc...) asparagine) is linked at Asn197. Residues 200 to 221 (FVIYMFTFHFLFPMFIIFFCYG) traverse the membrane as a helical segment. Residues 222-249 (RLLCAVKEAAAAQQESETTQRAEREVTR) are Cytoplasmic-facing. The helical transmembrane segment at 250–271 (MVILMVIGYLVCWLPYASVAWF) threads the bilayer. Residues 272–283 (IFTHKGSEFGPL) lie on the Extracellular side of the membrane. Residues 284 to 305 (FMAVPSFFAKSSSIYNPIIYIC) traverse the membrane as a helical segment. Lys293 is subject to N6-(retinylidene)lysine. Residues 306 to 347 (MNKQFRQCMITTLFCGKNPFEGQEEDSSTKTEASSASSVSPA) are Cytoplasmic-facing. The S-palmitoyl cysteine moiety is linked to residue Cys320. Positions 326 to 347 (EGQEEDSSTKTEASSASSVSPA) are disordered. Over residues 335–347 (KTEASSASSVSPA) the composition is skewed to low complexity.

It belongs to the G-protein coupled receptor 1 family. Opsin subfamily. In terms of processing, phosphorylated on some or all of the serine and threonine residues present in the C-terminal region. Post-translationally, contains one covalently linked retinal chromophore.

Its subcellular location is the membrane. The protein resides in the cell projection. It is found in the cilium. It localises to the photoreceptor outer segment. Its function is as follows. Photoreceptor required for image-forming vision at low light intensity. While most salt water fish species use retinal as chromophore, most freshwater fish use 3-dehydroretinal, or a mixture of retinal and 3-dehydroretinal. Light-induced isomerization of 11-cis to all-trans retinal triggers a conformational change that activates signaling via G-proteins. Subsequent receptor phosphorylation mediates displacement of the bound G-protein alpha subunit by arrestin and terminates signaling. In Sargocentron tiere (Blue lined squirrelfish), this protein is Rhodopsin (rho).